The chain runs to 395 residues: uncharacterized protein (395 aa).

This is an uncharacterized protein from Escherichia coli (strain K12).